A 521-amino-acid polypeptide reads, in one-letter code: Bifunctional purine biosynthesis protein PurH (521 aa).

An MGS-like domain is found at 1–145 (MIKQALISVS…KNHRDVTVVV (145 aa)).

Belongs to the PurH family.

The enzyme catalyses (6R)-10-formyltetrahydrofolate + 5-amino-1-(5-phospho-beta-D-ribosyl)imidazole-4-carboxamide = 5-formamido-1-(5-phospho-D-ribosyl)imidazole-4-carboxamide + (6S)-5,6,7,8-tetrahydrofolate. It carries out the reaction IMP + H2O = 5-formamido-1-(5-phospho-D-ribosyl)imidazole-4-carboxamide. The protein operates within purine metabolism; IMP biosynthesis via de novo pathway; 5-formamido-1-(5-phospho-D-ribosyl)imidazole-4-carboxamide from 5-amino-1-(5-phospho-D-ribosyl)imidazole-4-carboxamide (10-formyl THF route): step 1/1. It participates in purine metabolism; IMP biosynthesis via de novo pathway; IMP from 5-formamido-1-(5-phospho-D-ribosyl)imidazole-4-carboxamide: step 1/1. This chain is Bifunctional purine biosynthesis protein PurH, found in Burkholderia pseudomallei (strain 1710b).